A 55-amino-acid chain; its full sequence is U2-theraphotoxin-Cg1a (55 aa).

Residues 1 to 19 (DSPAWLKSMERIFQSEERE) constitute a propeptide that is removed on maturation. 3 disulfide bridges follow: Cys20–Cys34, Cys27–Cys39, and Cys33–Cys47.

The protein belongs to the neurotoxin 10 (Hwtx-1) family. 06 (F4b) subfamily. As to expression, expressed by the venom gland.

It is found in the secreted. Functionally, probable ion channel inhibitor. The protein is U2-theraphotoxin-Cg1a of Chilobrachys guangxiensis (Chinese earth tiger tarantula).